We begin with the raw amino-acid sequence, 323 residues long: Sphingolipid delta(4)-desaturase DES1 (323 aa).

A run of 2 helical transmembrane segments spans residues 41–61 (HNLI…FYLV) and 68–88 (WLLF…TLAI). Positions 89–93 (HEISH) match the Histidine box-1 motif. The helical transmembrane segment at 104–124 (WNRCFGMFANLPLGLPYSVSF) threads the bilayer. The short motif at 128-132 (HMDHH) is the Histidine box-2 element. The next 3 helical transmembrane spans lie at 152–172 (FFCT…FYTI), 185–205 (LEII…YTLG), and 210–230 (FYML…GHFI). The Histidine box-3 motif lies at 259 to 263 (HNEHH).

Belongs to the fatty acid desaturase type 1 family. DEGS subfamily. As to quaternary structure, interacts with RLBP1; the interaction increases synthesis of chromophore-precursors by DEGS1.

Its subcellular location is the endoplasmic reticulum membrane. It catalyses the reaction an N-acylsphinganine + 2 Fe(II)-[cytochrome b5] + O2 + 2 H(+) = an N-acylsphing-4-enine + 2 Fe(III)-[cytochrome b5] + 2 H2O. The catalysed reaction is all-trans-retinol = 11-cis-retinol. It carries out the reaction all-trans-retinol = 9-cis-retinol. The enzyme catalyses all-trans-retinol = 13-cis-retinol. It catalyses the reaction 11-cis-retinol = 13-cis-retinol. The catalysed reaction is 11-cis-retinol = 9-cis-retinol. In terms of biological role, has sphingolipid-delta-4-desaturase activity. Converts D-erythro-sphinganine to D-erythro-sphingosine (E-sphing-4-enine). Catalyzes the equilibrium isomerization of retinols. The protein is Sphingolipid delta(4)-desaturase DES1 (degs1) of Xenopus tropicalis (Western clawed frog).